We begin with the raw amino-acid sequence, 656 residues long: Nexilin (656 aa).

Disordered stretches follow at residues 1–131, 165–198, and 215–284; these read MNDV…IEQD, RAAA…EEEC, and TEAK…VFKE. Residues 11 to 26 show a composition bias toward low complexity; it reads LLSSSKPVPKSYVPKL. The segment covering 27–78 has biased composition (basic and acidic residues); it reads GKGDVKDKFEAMQRAREERNQRRSRDEKQRRKEQYIREREWNRRKQEIKDML. Ser80 is modified (phosphoserine). Basic and acidic residues-rich tracts occupy residues 103 to 131, 169 to 198, and 216 to 269; these read GKFD…IEQD, NRKD…EEEC, and EAKK…RNMV. Phosphoserine is present on residues Ser221, Ser330, Ser337, and Ser345. Residue Thr350 is modified to Phosphothreonine. Disordered stretches follow at residues 468–492 and 529–564; these read NFHE…HKVN and AALQ…APWF. Residues Ser544 and Ser549 each carry the phosphoserine modification. Residue Thr551 is modified to Phosphothreonine. Residues 562–650 enclose the Ig-like domain; sequence PWFKKPLRNT…GSAASTCILT (89 aa).

Interacts with F-actin. As to expression, expressed in brain, testis, spleen and fibroblasts (at protein level). Not detected in liver, kidney or epithelial cells (at protein level).

It localises to the cytoplasm. Its subcellular location is the cytoskeleton. The protein localises to the cell junction. It is found in the adherens junction. The protein resides in the myofibril. It localises to the sarcomere. Its subcellular location is the z line. Its function is as follows. Involved in regulating cell migration through association with the actin cytoskeleton. Has an essential role in the maintenance of Z line and sarcomere integrity. The chain is Nexilin from Rattus norvegicus (Rat).